A 113-amino-acid polypeptide reads, in one-letter code: Heavy metal-associated isoprenylated plant protein 15 (113 aa).

The HMA domain maps to 1 to 65 (MIVWMGVYDQ…KWGKAKLTLY (65 aa)). Residues 69–89 (DALKEAKIAEAKQKREEIERE) are a coiled coil. C110 is subject to Cysteine methyl ester. A lipid anchor (S-farnesyl cysteine) is attached at C110. Residues 111–113 (VIC) constitute a propeptide, removed in mature form.

It belongs to the HIPP family. Expressed in embryo sacs.

Probable heavy-metal-binding protein. The chain is Heavy metal-associated isoprenylated plant protein 15 from Arabidopsis thaliana (Mouse-ear cress).